The following is a 98-amino-acid chain: PqqA binding protein (98 aa).

Belongs to the PqqD family. As to quaternary structure, monomer. Interacts with PqqE.

It functions in the pathway cofactor biosynthesis; pyrroloquinoline quinone biosynthesis. Functions as a PqqA binding protein and presents PqqA to PqqE, in the pyrroloquinoline quinone (PQQ) biosynthetic pathway. The chain is PqqA binding protein from Rhizobium meliloti (strain 1021) (Ensifer meliloti).